A 118-amino-acid chain; its full sequence is Basic phospholipase A2 nigexine (118 aa).

Disulfide bonds link Cys11–Cys70, Cys26–Cys117, Cys28–Cys44, Cys43–Cys98, Cys50–Cys91, Cys59–Cys84, and Cys77–Cys89. Tyr27, Gly29, and Gly31 together coordinate Ca(2+). His47 is a catalytic residue. Asp48 contributes to the Ca(2+) binding site. The Coagulation factor Xa binding motif motif lies at 52 to 69 (EKAGKMGCWPYFTLYKYK). Residue Asp92 is part of the active site.

It belongs to the phospholipase A2 family. Group I subfamily. D49 sub-subfamily. It depends on Ca(2+) as a cofactor. Expressed by the venom gland.

It is found in the secreted. It catalyses the reaction a 1,2-diacyl-sn-glycero-3-phosphocholine + H2O = a 1-acyl-sn-glycero-3-phosphocholine + a fatty acid + H(+). Its function is as follows. Snake venom phospholipase A2 (PLA2) that shows anticoagulant activity, has cytotoxic activity and affects neuromuscular transmission in vitro. PLA2 catalyzes the calcium-dependent hydrolysis of the 2-acyl groups in 3-sn-phosphoglycerides. The protein is Basic phospholipase A2 nigexine of Naja pallida (Red spitting cobra).